The primary structure comprises 277 residues: Ribosomal RNA small subunit methyltransferase A (277 aa).

6 residues coordinate S-adenosyl-L-methionine: histidine 15, leucine 17, glycine 42, glutamate 64, aspartate 89, and asparagine 109.

It belongs to the class I-like SAM-binding methyltransferase superfamily. rRNA adenine N(6)-methyltransferase family. RsmA subfamily.

Its subcellular location is the cytoplasm. The enzyme catalyses adenosine(1518)/adenosine(1519) in 16S rRNA + 4 S-adenosyl-L-methionine = N(6)-dimethyladenosine(1518)/N(6)-dimethyladenosine(1519) in 16S rRNA + 4 S-adenosyl-L-homocysteine + 4 H(+). In terms of biological role, specifically dimethylates two adjacent adenosines (A1518 and A1519) in the loop of a conserved hairpin near the 3'-end of 16S rRNA in the 30S particle. May play a critical role in biogenesis of 30S subunits. This chain is Ribosomal RNA small subunit methyltransferase A, found in Synechococcus sp. (strain CC9311).